A 225-amino-acid chain; its full sequence is Uracil-DNA glycosylase (225 aa).

The active-site Proton acceptor is the D65.

The protein belongs to the uracil-DNA glycosylase (UDG) superfamily. UNG family.

The protein resides in the cytoplasm. It carries out the reaction Hydrolyzes single-stranded DNA or mismatched double-stranded DNA and polynucleotides, releasing free uracil.. In terms of biological role, excises uracil residues from the DNA which can arise as a result of misincorporation of dUMP residues by DNA polymerase or due to deamination of cytosine. This chain is Uracil-DNA glycosylase, found in Bacillus cereus (strain AH820).